Consider the following 126-residue polypeptide: SH2 domain-containing protein 1A (126 aa).

The region spanning 6-104 is the SH2 domain; sequence VYHGKISRET…VTPLQYPVEK (99 aa). Residues 67–92 form an interaction with FYN SH3 domain region; that stretch reads ETAPGVHKRFFRKVKNLISAFQKPDQ. An N6-acetyllysine modification is found at lysine 89. Residues 100 to 126 form a disordered region; the sequence is YPVEKSSGRGPQAPTGRRDSDICLNAP.

In terms of assembly, interacts with CD84, CD244, LY9, SLAMF1 and FYN. Interacts with NTRK1, NTRK2 and NTRK3. T-cells.

It is found in the cytoplasm. Functionally, cytoplasmic adapter regulating receptors of the signaling lymphocytic activation molecule (SLAM) family such as SLAMF1, CD244, LY9, CD84, SLAMF6 and SLAMF7. In SLAM signaling seems to cooperate with SH2D1B/EAT-2. Initially it has been proposed that association with SLAMF1 prevents SLAMF1 binding to inhibitory effectors including INPP5D/SHIP1 and PTPN11/SHP-2. However, by simultaneous interactions, recruits FYN which subsequently phosphorylates and activates SLAMF1. Positively regulates CD244/2B4- and CD84-mediated natural killer (NK) cell functions. Can also promote CD48-, SLAMF6 -, LY9-, and SLAMF7-mediated NK cell activation. In the context of NK cell-mediated cytotoxicity enhances conjugate formation with target cells. May also regulate the activity of the neurotrophin receptors NTRK1, NTRK2 and NTRK3. The protein is SH2 domain-containing protein 1A (Sh2d1a) of Mus musculus (Mouse).